Consider the following 236-residue polypeptide: MADS-box transcription factor 3 (236 aa).

The 61-residue stretch at 1–61 (MGRGKIEIKR…GRLYEYANNS (61 aa)) folds into the MADS-box domain. In terms of domain architecture, K-box spans 87–178 (AQHYQQESSK…RSKVVENERG (92 aa)).

As to expression, expressed in lemmas, paleas and lodicules.

It is found in the nucleus. Probable transcription factor involved in the development of floral organs. Acts as C-class protein in association with MADS58. Involved in the control of lodicule number (whorl 2), stamen specification (whorl 3) and floral meristem determinacy (whorl 4), but not in the regulation of carpel morphogenesis. Plays a more predominant role in controlling lodicule development and in specifying stamen identity than MADS58. The protein is MADS-box transcription factor 3 (MADS3) of Oryza sativa subsp. japonica (Rice).